The chain runs to 636 residues: Carbon monoxide dehydrogenase 1 (636 aa).

Residues Cys-38, Cys-46, Cys-47, Cys-50, Cys-55, and Cys-69 each contribute to the [4Fe-4S] cluster site. Residues His-262, Cys-297, Cys-335, Cys-448, Cys-478, and Cys-528 each coordinate [Ni-4Fe-5S] cluster.

Belongs to the Ni-containing carbon monoxide dehydrogenase family. In terms of assembly, homodimer. It depends on [4Fe-4S] cluster as a cofactor. [Ni-4Fe-5S] cluster is required as a cofactor.

It localises to the cytoplasm. The protein localises to the cell membrane. The enzyme catalyses CO + 2 oxidized [2Fe-2S]-[ferredoxin] + H2O = 2 reduced [2Fe-2S]-[ferredoxin] + CO2 + 2 H(+). With respect to regulation, inactivated by O(2). Its function is as follows. CODH oxidizes carbon monoxide coupled, via CooF, to the reduction of a hydrogen cation by a hydrogenase (possibly CooH). In Carboxydothermus hydrogenoformans (strain ATCC BAA-161 / DSM 6008 / Z-2901), this protein is Carbon monoxide dehydrogenase 1 (cooS1).